The sequence spans 185 residues: Peptidyl-tRNA hydrolase (185 aa).

Position 14 (Y14) interacts with tRNA. H19 acts as the Proton acceptor in catalysis. Positions 64, 66, and 112 each coordinate tRNA.

The protein belongs to the PTH family. In terms of assembly, monomer.

It is found in the cytoplasm. The catalysed reaction is an N-acyl-L-alpha-aminoacyl-tRNA + H2O = an N-acyl-L-amino acid + a tRNA + H(+). In terms of biological role, hydrolyzes ribosome-free peptidyl-tRNAs (with 1 or more amino acids incorporated), which drop off the ribosome during protein synthesis, or as a result of ribosome stalling. Catalyzes the release of premature peptidyl moieties from peptidyl-tRNA molecules trapped in stalled 50S ribosomal subunits, and thus maintains levels of free tRNAs and 50S ribosomes. The protein is Peptidyl-tRNA hydrolase of Pediococcus pentosaceus (strain ATCC 25745 / CCUG 21536 / LMG 10740 / 183-1w).